We begin with the raw amino-acid sequence, 279 residues long: MKKFAVFGNPIAQSLSPTIHQMFADQVGEKISYEKILAPEDGFVEAAKAFLAQEGAVGCNVTMPFKLDAFNLAKVDDQAAKDAQAVNTLMNGDRGELLGFNTDGVGLVNDLLNSGVKIKDKHVLLIGAGGAARGVISPLLKAGAATLTIANRTKAKAEEVASAASNPKVDVVALEDIATIAPHIIINSTAASLSNALPCSLNDGVLQHCEVVYDMVYKNSPTRFMRDAAELGVKTQIDGLGMLVEQAAEAFYIWTQKRPDTSDIVKRVRDIVEQSEKRN.

Residues 14-16 (SLS) and T62 each bind shikimate. Residue K66 is the Proton acceptor of the active site. Residues N87 and D103 each contribute to the shikimate site. NADP(+) contacts are provided by residues 127-131 (GAGGA), 151-156 (NRTKAK), and M215. Position 217 (Y217) interacts with shikimate. Position 239 (G239) interacts with NADP(+).

This sequence belongs to the shikimate dehydrogenase family. Homodimer.

The enzyme catalyses shikimate + NADP(+) = 3-dehydroshikimate + NADPH + H(+). It functions in the pathway metabolic intermediate biosynthesis; chorismate biosynthesis; chorismate from D-erythrose 4-phosphate and phosphoenolpyruvate: step 4/7. Its function is as follows. Involved in the biosynthesis of the chorismate, which leads to the biosynthesis of aromatic amino acids. Catalyzes the reversible NADPH linked reduction of 3-dehydroshikimate (DHSA) to yield shikimate (SA). This Alteromonas mediterranea (strain DSM 17117 / CIP 110805 / LMG 28347 / Deep ecotype) protein is Shikimate dehydrogenase (NADP(+)).